A 463-amino-acid polypeptide reads, in one-letter code: uncharacterized protein (463 aa).

The first 23 residues, 1 to 23 (MKFSSIPIASTLLSLLVASSVTA), serve as a signal peptide directing secretion. 2 disordered regions span residues 174–200 (STYN…TKAS) and 239–258 (GAST…QRKN).

Belongs to the but2 family.

Its subcellular location is the cytoplasm. This is an uncharacterized protein from Schizosaccharomyces pombe (strain 972 / ATCC 24843) (Fission yeast).